Reading from the N-terminus, the 87-residue chain is U3-theraphotoxin-Hhn1a 17 (87 aa).

A signal peptide spans 1–24 (MVNVKASMFLTFAGLVLLFVVCYA). Residues 25 to 52 (SESEEKEFPKEMLSSIFAVDNDFKQEER) constitute a propeptide that is removed on maturation. Disulfide bonds link Cys54–Cys67, Cys61–Cys72, and Cys66–Cys79.

The protein belongs to the neurotoxin 10 (Hwtx-1) family. 51 (Hntx-8) subfamily. Hntx-8 sub-subfamily. In terms of tissue distribution, expressed by the venom gland.

It localises to the secreted. In terms of biological role, ion channel inhibitor. The chain is U3-theraphotoxin-Hhn1a 17 from Cyriopagopus hainanus (Chinese bird spider).